Consider the following 469-residue polypeptide: Soluble pyridine nucleotide transhydrogenase (469 aa).

Residue 39 to 48 (ERENSVGGGC) participates in FAD binding.

It belongs to the class-I pyridine nucleotide-disulfide oxidoreductase family. FAD serves as cofactor.

The protein resides in the cytoplasm. It catalyses the reaction NAD(+) + NADPH = NADH + NADP(+). In terms of biological role, conversion of NADPH, generated by peripheral catabolic pathways, to NADH, which can enter the respiratory chain for energy generation. In Photobacterium profundum (strain SS9), this protein is Soluble pyridine nucleotide transhydrogenase.